A 65-amino-acid polypeptide reads, in one-letter code: Small ribosomal subunit protein eS27 (65 aa).

Positions 20, 23, 39, and 42 each coordinate Zn(2+). Residues 20–42 form a C4-type zinc finger; the sequence is CIDCGNEQIVFSHPATRVRCLVC.

The protein belongs to the eukaryotic ribosomal protein eS27 family. Part of the 30S ribosomal subunit. It depends on Zn(2+) as a cofactor.

This chain is Small ribosomal subunit protein eS27, found in Pyrococcus horikoshii (strain ATCC 700860 / DSM 12428 / JCM 9974 / NBRC 100139 / OT-3).